The sequence spans 712 residues: Translation initiation factor eIF2B subunit epsilon (712 aa).

Residues M1–D20 are disordered. 6 positions are modified to phosphoserine: S478, S481, S507, S525, S538, and S707. The W2 domain occupies E539–E710.

Belongs to the eIF-2B gamma/epsilon subunits family. In terms of assembly, component of the translation initiation factor 2B (eIF2B) complex which is a heterodecamer of two sets of five different subunits: alpha, beta, gamma, delta and epsilon. Subunits alpha, beta and delta comprise a regulatory subcomplex and subunits epsilon and gamma comprise a catalytic subcomplex. Within the complex, the hexameric regulatory complex resides at the center, with the two heterodimeric catalytic subcomplexes bound on opposite sides.

The protein localises to the cytoplasm. The protein resides in the cytosol. Acts as a catalytic component of the translation initiation factor 2B (eIF2B) complex, which catalyzes the exchange of GDP for GTP on eukaryotic initiation factor 2 (eIF2) and is regulated by phosphorylated eIF2. Its guanine nucleotide exchange factor activity is repressed when bound to eIF2 complex phosphorylated on the alpha subunit, thereby limiting the amount of methionyl-initiator methionine tRNA available to the ribosome and consequently global translation is repressed. It activates the synthesis of GCN4 in yeast under amino acid starvation conditions by suppressing the inhibitory effects of multiple AUG codons present in the leader of GCN4 mRNA. It may promote either repression or activation of GCN4 expression depending on amino acid availability. GCD6 and GCD7 repress GCN4 expression at the translational level by ensuring that ribosomes which have translated UORF1 will reinitiate at UORF2, -3, or -4 and thus fail to reach the GCN4 start site. This chain is Translation initiation factor eIF2B subunit epsilon (GCD6), found in Saccharomyces cerevisiae (strain ATCC 204508 / S288c) (Baker's yeast).